Reading from the N-terminus, the 125-residue chain is Ribosome-binding factor A (125 aa).

It belongs to the RbfA family. As to quaternary structure, monomer. Binds 30S ribosomal subunits, but not 50S ribosomal subunits or 70S ribosomes.

It localises to the cytoplasm. In terms of biological role, one of several proteins that assist in the late maturation steps of the functional core of the 30S ribosomal subunit. Associates with free 30S ribosomal subunits (but not with 30S subunits that are part of 70S ribosomes or polysomes). Required for efficient processing of 16S rRNA. May interact with the 5'-terminal helix region of 16S rRNA. The polypeptide is Ribosome-binding factor A (Carboxydothermus hydrogenoformans (strain ATCC BAA-161 / DSM 6008 / Z-2901)).